We begin with the raw amino-acid sequence, 875 residues long: Alanine--tRNA ligase (875 aa).

Zn(2+) is bound by residues His-564, His-568, Cys-666, and His-670.

It belongs to the class-II aminoacyl-tRNA synthetase family. Homotetramer. Zn(2+) is required as a cofactor.

The protein localises to the cytoplasm. The catalysed reaction is tRNA(Ala) + L-alanine + ATP = L-alanyl-tRNA(Ala) + AMP + diphosphate. In terms of biological role, catalyzes the attachment of alanine to tRNA(Ala) in a two-step reaction: alanine is first activated by ATP to form Ala-AMP and then transferred to the acceptor end of tRNA(Ala). Also edits incorrectly charged Ser-tRNA(Ala) and Gly-tRNA(Ala) via its editing domain. This Yersinia enterocolitica serotype O:8 / biotype 1B (strain NCTC 13174 / 8081) protein is Alanine--tRNA ligase.